Reading from the N-terminus, the 174-residue chain is Nucleoside-triphosphatase THEP1 (174 aa).

Residues 7–14 (GRPGVGKT) and 94–101 (LIIIDEIG) contribute to the ATP site.

It belongs to the THEP1 NTPase family.

It catalyses the reaction a ribonucleoside 5'-triphosphate + H2O = a ribonucleoside 5'-diphosphate + phosphate + H(+). In terms of biological role, has nucleotide phosphatase activity towards ATP, GTP, CTP, TTP and UTP. May hydrolyze nucleoside diphosphates with lower efficiency. This Thermotoga sp. (strain RQ2) protein is Nucleoside-triphosphatase THEP1.